A 455-amino-acid polypeptide reads, in one-letter code: Proline--tRNA ligase (455 aa).

3 residues coordinate L-proline: T101, E103, and R132. 4 residues coordinate ATP: R132, E134, Q216, and T219. An L-proline-binding site is contributed by H221. ATP is bound by residues S253 and R255. Positions 329 to 359 are interaction with tRNA; the sequence is EIKGVPLRIEVGPKDIENKKITLFRRDTMEK.

This sequence belongs to the class-II aminoacyl-tRNA synthetase family. ProS type 3 subfamily. In terms of assembly, homodimer. The dimer is functionally asymmetric: only one of the two active sites at a time is able to form prolyl-adenylate, and only one tRNA molecule binds per dimer.

The protein localises to the cytoplasm. The catalysed reaction is tRNA(Pro) + L-proline + ATP = L-prolyl-tRNA(Pro) + AMP + diphosphate. With respect to regulation, inhibited by high concentrations of prolinamide. Functionally, catalyzes the attachment of proline to tRNA(Pro) in a two-step reaction: proline is first activated by ATP to form Pro-AMP and then transferred to the acceptor end of tRNA(Pro). Can inadvertently accommodate and process non-cognate amino acids such as cysteine and alanine. The polypeptide is Proline--tRNA ligase (proS) (Methanocaldococcus jannaschii (strain ATCC 43067 / DSM 2661 / JAL-1 / JCM 10045 / NBRC 100440) (Methanococcus jannaschii)).